Here is a 334-residue protein sequence, read N- to C-terminus: MIRLSILDQSLIGEGETAADTLQHTVKLAQMAEECGYHRFWVAEHHNNDEIAGSAPEVLLGYLAASTRKIRLASGGVMLQHYSSYKVAEQFHLLSALAPGRIDLGVGKAPGGFQLSTDALQAEYKKPVRQFDEKLEELTHFVRDDFPDTHRYAALRPRPQVDRKPGIFLLGGSTESAISAAKLGISFVFAYFINGEEEVLKEARRAFDAHLPPGSEAEFHLAPAVFAAHTKEEAEKHIVSRESIKVVLKDGRKVNVGSREQAEAYLENVTEPYDIIVQKTGIIAGTKEEVAEELTRLSGTYKINDFVIFTPIKNAVEKQLSYQLLSDAVLAAKR.

To bacterial alkanal monooxygenase alpha and beta chains.

The enzyme catalyses N-acetyl-S-benzyl-L-cysteine + FMNH2 + O2 = (R)-N-acetyl-S-benzyl-L-cysteine sulfoxide + FMN + H2O + H(+). It carries out the reaction N-acetyl-S-methyl-L-cysteine + FMNH2 + O2 = (R)-N-acetyl-S-methyl-L-cysteine sulfoxide + FMN + H2O + H(+). Its pathway is amino-acid metabolism. Involved in a cysteine salvage pathway from S-alkylcysteine. Catalyzes the oxidation of N-acetyl-S-benzyl-L-cysteine and N-acetyl-S-methyl-L-cysteine to (R)-N-acetyl-S-benzyl-L-cysteine sulfoxide and (R)-N-acetyl-S-methyl-L-cysteine sulfoxide, respectively. This pathway is likely important in the catabolism of alkylated cysteine generated by proteolysis of alkylated glutathione formed in the detoxification of a wide range of electrophiles. The sequence is that of N-acetyl-S-alkylcysteine monooxygenase from Bacillus subtilis (strain 168).